The following is a 190-amino-acid chain: Elongation factor P-like protein (190 aa).

The protein belongs to the elongation factor P family.

This Pectobacterium carotovorum subsp. carotovorum (strain PC1) protein is Elongation factor P-like protein.